Here is a 133-residue protein sequence, read N- to C-terminus: Ribosome-binding factor A (133 aa).

The protein belongs to the RbfA family. In terms of assembly, monomer. Binds 30S ribosomal subunits, but not 50S ribosomal subunits or 70S ribosomes.

It localises to the cytoplasm. Its function is as follows. One of several proteins that assist in the late maturation steps of the functional core of the 30S ribosomal subunit. Associates with free 30S ribosomal subunits (but not with 30S subunits that are part of 70S ribosomes or polysomes). Required for efficient processing of 16S rRNA. May interact with the 5'-terminal helix region of 16S rRNA. This Salmonella heidelberg (strain SL476) protein is Ribosome-binding factor A.